A 174-amino-acid chain; its full sequence is Ribosome maturation factor RimM (174 aa).

The 74-residue stretch at 96 to 169 folds into the PRC barrel domain; it reads KDTFFICDLI…KMVVDLPQGL (74 aa).

This sequence belongs to the RimM family. In terms of assembly, binds ribosomal protein uS19.

It localises to the cytoplasm. In terms of biological role, an accessory protein needed during the final step in the assembly of 30S ribosomal subunit, possibly for assembly of the head region. Essential for efficient processing of 16S rRNA. May be needed both before and after RbfA during the maturation of 16S rRNA. It has affinity for free ribosomal 30S subunits but not for 70S ribosomes. This is Ribosome maturation factor RimM from Acetivibrio thermocellus (strain ATCC 27405 / DSM 1237 / JCM 9322 / NBRC 103400 / NCIMB 10682 / NRRL B-4536 / VPI 7372) (Clostridium thermocellum).